We begin with the raw amino-acid sequence, 484 residues long: RxLR effector protein PexRD18 (484 aa).

Positions 1–20 are cleaved as a signal peptide; it reads MSHQRILLLLMAAFFAWVSA. Residues 55–79 carry the RxLR-dEER motif; sequence RFLRLYDAEVRDTVRGDNDVDREER.

This sequence belongs to the RxLR effector family.

It is found in the secreted. The protein resides in the host cell membrane. Functionally, effector that enhances P.infestans colonization of Nicotiana benthamiana leaves. This chain is RxLR effector protein PexRD18, found in Phytophthora infestans (strain T30-4) (Potato late blight agent).